Here is a 31-residue protein sequence, read N- to C-terminus: Ranatuerin-2 (31 aa).

A disulfide bond links Cys23 and Cys28.

This sequence belongs to the frog skin active peptide (FSAP) family. Ranatuerin subfamily. Expressed by the skin glands.

It is found in the secreted. In terms of biological role, antibacterial activity against Gram-positive bacterium S.aureus (MIC=60 uM). Shows no detectable hemolytic activity towards human erythrocytes. The polypeptide is Ranatuerin-2 (Aquarana catesbeiana (American bullfrog)).